The following is a 483-amino-acid chain: Cysteine proteinase 1, mitochondrial (483 aa).

The N-terminal 30 residues, 1-30, are a transit peptide targeting the mitochondrion; it reads MLPTSVSRSLYLKTFRSHLLRAPQIVLKRM. Active-site residues include Cys102, His398, and Asn421. Lys483 is a propeptide (removed in mature form; by autocatalysis).

This sequence belongs to the peptidase C1 family. Homohexamer. Binds to nucleic acids. Binds single-stranded DNA and RNA with higher affinity than double-stranded DNA. Post-translationally, the N-terminus of isoform Cytoplasmic is blocked.

The protein resides in the mitochondrion. Its subcellular location is the cytoplasm. The catalysed reaction is Inactivates bleomycin B2 (a cytotoxic glycometallopeptide) by hydrolysis of a carboxyamide bond of beta-aminoalanine, but also shows general aminopeptidase activity. The specificity varies somewhat with source, but amino acid arylamides of Met, Leu and Ala are preferred.. With respect to regulation, inhibited by E64, a specific inhibitor of cysteine proteases, N-ethylmaleimide, iodacetamide, and mercury and zinc ions. Functionally, the normal physiological role of the enzyme is unknown, but it is not essential for the viability of yeast cells. Has aminopeptidase activity, shortening substrate peptides sequentially by 1 amino acid. Has bleomycin hydrolase activity, which can protect the cell from the toxic effects of bleomycin. Has homocysteine-thiolactonase activity, protecting the cell against homocysteine toxicity. Acts as a repressor in the GAL4 regulatory system, but this does not require either the peptidase or nucleic acid-binding activities. The protein is Cysteine proteinase 1, mitochondrial (LAP3) of Saccharomyces cerevisiae (strain JAY291) (Baker's yeast).